A 917-amino-acid chain; its full sequence is Sensor histidine kinase GacS (917 aa).

2 consecutive transmembrane segments (helical) span residues 11 to 31 and 168 to 188; these read VLLL…GYFT and SLFA…LLAV. The HAMP domain maps to 192–244; it reads RTINNPLTQIKQAVAQLKDGNLETRLPPLGSQELDELASGINRMASTLQNAQE. Positions 291 to 512 constitute a Histidine kinase domain; it reads NMSHEIRTPL…EFWISLNLPK (222 aa). His-294 carries the phosphohistidine; by autocatalysis modification. In terms of domain architecture, Response regulatory spans 668 to 787; the sequence is RVLCVDDNPA…QLAQVVLKWT (120 aa). Asp-717 bears the 4-aspartylphosphate mark. Positions 824–917 constitute an HPt domain; sequence KADLAADMLA…RLAAEARTNA (94 aa). Residue His-863 is modified to Phosphohistidine.

In terms of processing, activation requires a sequential transfer of a phosphate group from a His in the primary transmitter domain, to an Asp in the receiver domain and to a His in the secondary transmitter domain.

The protein resides in the cell inner membrane. The catalysed reaction is ATP + protein L-histidine = ADP + protein N-phospho-L-histidine.. Its function is as follows. Member of the two-component regulatory system GacA/GacS which controls the expression of secondary metabolites and extracellular products. Activates GacA by phosphorylation. GacA acts (probably primarily) by activating expression of CsrA1 and CsrA2 antagonist small RNAs (sRNA) RsmX, RsmY and RsmZ which bind to and prevent translation repression by CsrA1 and CsrA2. Involved in the regulation of secondary metabolism and in the synthesis of the antifungal factors cyanide, 2,4-diacetylphloroglucinol and pyoluteorin. Exercises positive post-transcriptional control over the hcnABC and aprA genes; acts upstream of CsrA2 (rsmA). Controls expression of CsrA1 and CsrA2 antagonist sRNAs RsmX, RsmY and probably RsmZ. Probably controls expression of csrA1 (rsmE) and csrA2. The chain is Sensor histidine kinase GacS (gacS) from Pseudomonas protegens (strain DSM 19095 / LMG 27888 / CFBP 6595 / CHA0).